Consider the following 235-residue polypeptide: Exosome complex component RRP46 (235 aa).

The disordered stretch occupies residues 1–21 (MEGAKRADANLLTDTGTESSP). Positions 12 to 21 (LTDTGTESSP) are enriched in polar residues. Phosphoserine occurs at positions 20 and 23.

It belongs to the RNase PH family. As to quaternary structure, homodimer. Component of the RNA exosome core complex (Exo-9), composed of EXOSC1, EXOSC2, EXOSC3, EXOSC4, EXOSC5, EXOSC6, EXOSC7, EXOSC8 and EXOSC9; within the complex interacts with EXOSC3, EXOSC8, and EXOSC9. The catalytically inactive RNA exosome core complex (Exo-9) associates with the catalytic subunit EXOSC10/RRP6. Exo-9 may associate with DIS3 to form the nucleolar exosome complex, or DIS3L to form the cytoplasmic exosome complex. Exo-9 is formed by a hexameric base ring consisting of the heterodimers EXOSC4-EXOSC9, EXOSC5-EXOSC8 and EXOSC6-EXOSC7, and a cap ring consisting of EXOSC1, EXOSC2 and EXOSC3. The RNA exosome complex associates with cofactors C1D/RRP47, MPHOSPH6/MPP6 and MTREX/MTR4. Interacts with GTPBP1. Interacts with ZC3HAV1. Interacts with DDX17 only in the presence of ZC3HAV1 in an RNA-independent manner.

It is found in the nucleus. The protein resides in the nucleolus. The protein localises to the cytoplasm. Functionally, non-catalytic component of the RNA exosome complex which has 3'-&gt;5' exoribonuclease activity and participates in a multitude of cellular RNA processing and degradation events. In the nucleus, the RNA exosome complex is involved in proper maturation of stable RNA species such as rRNA, snRNA and snoRNA, in the elimination of RNA processing by-products and non-coding 'pervasive' transcripts, such as antisense RNA species and promoter-upstream transcripts (PROMPTs), and of mRNAs with processing defects, thereby limiting or excluding their export to the cytoplasm. The RNA exosome may be involved in Ig class switch recombination (CSR) and/or Ig variable region somatic hypermutation (SHM) by targeting AICDA deamination activity to transcribed dsDNA substrates. In the cytoplasm, the RNA exosome complex is involved in general mRNA turnover and specifically degrades inherently unstable mRNAs containing AU-rich elements (AREs) within their 3' untranslated regions, and in RNA surveillance pathways, preventing translation of aberrant mRNAs. It seems to be involved in degradation of histone mRNA. The catalytic inactive RNA exosome core complex of 9 subunits (Exo-9) is proposed to play a pivotal role in the binding and presentation of RNA for ribonucleolysis, and to serve as a scaffold for the association with catalytic subunits and accessory proteins or complexes. In vitro, EXOSC5 does not bind or digest single-stranded RNA and binds to double-stranded DNA without detectable DNase activity. This Mus musculus (Mouse) protein is Exosome complex component RRP46 (Exosc5).